The primary structure comprises 482 residues: 2-succinylbenzoate--CoA ligase (482 aa).

This sequence belongs to the ATP-dependent AMP-binding enzyme family. MenE subfamily.

It catalyses the reaction 2-succinylbenzoate + ATP + CoA = 2-succinylbenzoyl-CoA + AMP + diphosphate. Its pathway is quinol/quinone metabolism; 1,4-dihydroxy-2-naphthoate biosynthesis; 1,4-dihydroxy-2-naphthoate from chorismate: step 5/7. The protein operates within quinol/quinone metabolism; menaquinone biosynthesis. Its function is as follows. Converts 2-succinylbenzoate (OSB) to 2-succinylbenzoyl-CoA (OSB-CoA). In Bacillus cereus (strain ZK / E33L), this protein is 2-succinylbenzoate--CoA ligase.